The chain runs to 292 residues: Potassium channel, subfamily K, member 16 (292 aa).

The Cytoplasmic segment spans residues 1-13 (MPRAGVCGCWGGQ). Residues 14–34 (VLPLLLAYICYLLLGATIFQL) traverse the membrane as a helical segment. Residues 98-116 (SFFFAGTVVTTIGYGNLAP) constitute an intramembrane region (pore-forming). K(+) is bound by residues Thr108, Ile109, Gly110, and Tyr111. Residues 108–113 (TIGYGN) form a selectivity filter 1 region. The helical transmembrane segment at 120-140 (AGQVFCVFYALMGIPLNVVFL) threads the bilayer. Topologically, residues 141-165 (NHLGTGLRAHLTTLDRWEDHPRHSQ) are cytoplasmic. The chain crosses the membrane as a helical span at residues 166 to 186 (LLQVLGLALFLTLGTLVILIF). An intramembrane region (pore-forming) is located at residues 202 to 221 (GFYFAFITLSTIGFGDYVVG). Residues Thr212, Ile213, Gly214, and Phe215 each contribute to the K(+) site. The segment at 212-217 (TIGFGD) is selectivity filter 2. A helical transmembrane segment spans residues 238–258 (IWILLGLAWLAVVLSLGSLLL). Residues 259–292 (HRCSRLWQLIRGLDLKDGAAPDSEPRSQKIPISA) are Cytoplasmic-facing.

This sequence belongs to the two pore domain potassium channel (TC 1.A.1.8) family. In terms of assembly, homodimer; disulfide-linked. Heterodimer with KCNK17 and KCNK5. Expressed in pacreatic beta-cells (at protein level). Expressed in pacreatic delta-cells (at protein level).

It is found in the cell membrane. The protein resides in the endoplasmic reticulum membrane. The protein localises to the mitochondrion inner membrane. The enzyme catalyses K(+)(in) = K(+)(out). It catalyses the reaction Rb(+)(in) = Rb(+)(out). The catalysed reaction is Cs(+)(in) = Cs(+)(out). K(+) channel that conducts voltage-dependent outward rectifying currents upon membrane depolarization. Voltage sensing is coupled to K(+) electrochemical gradient in an 'ion flux gating' mode where outward but not inward ion flow opens the gate. Homo- and heterodimerizes to form functional channels with distinct regulatory and gating properties. In pancreatic islets, conducts K(+) countercurrents for Ca(2+) release from the endoplasmic reticulum (ER) and regulates the frequency and duration of cytosolic Ca(2+) oscillations coupled to secretion of pancreatic hormones. In pancreatic beta cells, drives ER Ca(2+) efflux, which in turn activates Ca(2+)-dependent plasma membrane K(+) slow currents and cytosolic Ca(2+) influx, overall contributing to synchronous cytosolic Ca(2+) oscillations. Limits glucose-induced cytosolic Ca(2+) oscillations coupled to second-phase INS secretion. Contributes to beta cell adaptation to acute inflammation by maintaining normal cytosolic Ca(2+) levels and INS secretion. May regulate beta cell mitochondrial Ca(2+) levels either indirectly via ER Ca(2+) efflux or directly by hyperpolarizing the mitochondrial membrane potential. Limits mitochondrial Ca(2+) oscillations and ATP production involved in glucose homeostasis upon metabolic stress. In pancreatic delta cells, limits Ca(2+)-induced Ca(2+)-release involved in somatostatin secretion and modulates islet paracrine signaling involved in glucagon secretion. Permeable to other monovalent cations such as Rb(+) and Cs(+). This Mus musculus (Mouse) protein is Potassium channel, subfamily K, member 16.